Here is a 435-residue protein sequence, read N- to C-terminus: uncharacterized protein (435 aa).

The next 12 membrane-spanning stretches (helical) occupy residues 14-34, 44-64, 84-104, 123-143, 153-173, 187-207, 224-244, 267-287, 324-344, 346-366, 375-395, and 400-420; these read VSMAVGVMIGASIFSIFGVGA, TFILSGIYALLVAYSYTKLGA, IITGALSILLWMSYVISIALF, FNIAITEIGIVAFFTALNFFG, FIVLVKLLILGLFIFAGLITI, VSGMIFASAIFFLSYMGFGVI, AIFISILIVMFVYVGVAISAI, FLGNLGFLLISIGALFSISSA, LYITSALGVLFALLFNMEGVA, ITSAVFMVIYLFVILSHYILI, IVIFSFIVVLGVFLLLLYYQW, and FVFYGIIATFIGVLIFEIIYR.

It localises to the cell membrane. This is an uncharacterized protein from Methanocaldococcus jannaschii (strain ATCC 43067 / DSM 2661 / JAL-1 / JCM 10045 / NBRC 100440) (Methanococcus jannaschii).